The primary structure comprises 668 residues: Cyclin-dependent kinase 11.2 (668 aa).

The interval 1 to 265 is disordered; sequence MSNYSTNGSR…EQWESMTENE (265 aa). Basic and acidic residues-rich tracts occupy residues 35–73, 85–127, and 140–163; these read KTKEERYRDKEKERDHERHHDRERRDDRYRKVDSRDHRD, YCRD…DSLR, and LPDDGKLFDRILDPNYKKKEKTVM. A compositionally biased stretch (acidic residues) spans 164–181; it reads EVEDVEMSPVEMLDEEEV. Composition is skewed to basic and acidic residues over residues 197-212 and 245-265; these read NEPEEKDYKSEGDPES and PDDKYGKTPDKEQWESMTENE. A Protein kinase domain is found at 304–600; sequence YVILNVIAEG…ASEALQHDWF (297 aa). Residues 310 to 318 and K333 each bind ATP; that span reads IAEGTYGEV. The active-site Proton acceptor is D432.

Belongs to the protein kinase superfamily. CMGC Ser/Thr protein kinase family. CDC2/CDKX subfamily. Expressed in somatic cells and at varying levels throughout the germline (at protein level). Highly expressed in the germ line of hermaphrodites (at protein level).

The protein localises to the nucleus. It is found in the cytoplasm. The catalysed reaction is L-seryl-[protein] + ATP = O-phospho-L-seryl-[protein] + ADP + H(+). It catalyses the reaction L-threonyl-[protein] + ATP = O-phospho-L-threonyl-[protein] + ADP + H(+). In terms of biological role, probable cyclin-dependent kinase whose activity is most likely regulated by the cyclin cyl-1/Cylin-L. Acts partially redundantly with cdk-11.1 to ensure embryonic viability. In contrast to cdk-11.1, not essential for male and female fertility. The polypeptide is Cyclin-dependent kinase 11.2 (Caenorhabditis elegans).